The primary structure comprises 265 residues: Uroporphyrinogen-III synthase (265 aa).

It belongs to the uroporphyrinogen-III synthase family. Monomer.

It localises to the cytoplasm. The protein localises to the cytosol. The catalysed reaction is hydroxymethylbilane = uroporphyrinogen III + H2O. It functions in the pathway porphyrin-containing compound metabolism; protoporphyrin-IX biosynthesis; coproporphyrinogen-III from 5-aminolevulinate: step 3/4. Catalyzes cyclization of the linear tetrapyrrole, hydroxymethylbilane, to the macrocyclic uroporphyrinogen III, the branch point for the various sub-pathways leading to the wide diversity of porphyrins. Porphyrins act as cofactors for a multitude of enzymes that perform a variety of processes within the cell such as methionine synthesis (vitamin B12) or oxygen transport (heme). In Mus musculus (Mouse), this protein is Uroporphyrinogen-III synthase (Uros).